The following is a 486-amino-acid chain: MASIRELHEQLVKKERSAVEITQETLDHIQELEPKLHSFLHITAQQALEQARAVDAKIAAGEEIGLLAGIPIGVKDNMCTKGIPTTCASRILENFVPPYESTVTQKLLDAGAVVVGKTNLDEFAMGSSTENSAYQVTANPWDLSRVPGGSSGGSAAAVAAEECVVALGSDTGGSIRQPASFCGVVGLKPTYGLVSRYGLVAYASSLDQIGPFGKSVEDTAILLKAIAGYDHQDSTSLKVEIPDYVASLKPDLKARSKLRIGIIKETFGEGLDSVVEQAVTKAIEQLQRLGAEVHVISCPNFRYGVPSYYIIAPSEASANLARYDGVKYGWRAPEGDNLLSMYKRTRATGFGAEVKRRIMIGTYALSAGYYDAYYLKAQKVRTLIKQDFENAFKNVDVLVSPTAPTTAFKAGEKTADPISMYLNDLMTIPVNLAGLPGLSVPCGFDEQGLPIGLQLIGKVLREDQLLQIAYAYEQSTSWHLSQPKIS.

Residues Lys75 and Ser150 each act as charge relay system in the active site. Catalysis depends on Ser174, which acts as the Acyl-ester intermediate.

Belongs to the amidase family. GatA subfamily. In terms of assembly, heterotrimer of A, B and C subunits.

The catalysed reaction is L-glutamyl-tRNA(Gln) + L-glutamine + ATP + H2O = L-glutaminyl-tRNA(Gln) + L-glutamate + ADP + phosphate + H(+). Functionally, allows the formation of correctly charged Gln-tRNA(Gln) through the transamidation of misacylated Glu-tRNA(Gln) in organisms which lack glutaminyl-tRNA synthetase. The reaction takes place in the presence of glutamine and ATP through an activated gamma-phospho-Glu-tRNA(Gln). This is Glutamyl-tRNA(Gln) amidotransferase subunit A from Nostoc sp. (strain PCC 7120 / SAG 25.82 / UTEX 2576).